The primary structure comprises 194 residues: Thymidylate kinase (194 aa).

7 to 14 (GVDGVGKS) lines the ATP pocket.

The protein belongs to the thymidylate kinase family.

The catalysed reaction is dTMP + ATP = dTDP + ADP. In terms of biological role, phosphorylation of dTMP to form dTDP in both de novo and salvage pathways of dTTP synthesis. The chain is Thymidylate kinase from Campylobacter curvus (strain 525.92).